Here is a 171-residue protein sequence, read N- to C-terminus: CDP-archaeol synthase (171 aa).

4 helical membrane passes run 11 to 31 (VLYV…GLVF), 65 to 85 (VGLV…IGVI), 129 to 149 (LILV…IMLI), and 151 to 171 (LVLH…DVWY).

It belongs to the CDP-archaeol synthase family. The cofactor is Mg(2+).

Its subcellular location is the cell membrane. It catalyses the reaction 2,3-bis-O-(geranylgeranyl)-sn-glycerol 1-phosphate + CTP + H(+) = CDP-2,3-bis-O-(geranylgeranyl)-sn-glycerol + diphosphate. The protein operates within membrane lipid metabolism; glycerophospholipid metabolism. Its function is as follows. Catalyzes the formation of CDP-2,3-bis-(O-geranylgeranyl)-sn-glycerol (CDP-archaeol) from 2,3-bis-(O-geranylgeranyl)-sn-glycerol 1-phosphate (DGGGP) and CTP. This reaction is the third ether-bond-formation step in the biosynthesis of archaeal membrane lipids. In Methanothermobacter thermautotrophicus (strain ATCC 29096 / DSM 1053 / JCM 10044 / NBRC 100330 / Delta H) (Methanobacterium thermoautotrophicum), this protein is CDP-archaeol synthase.